The sequence spans 105 residues: Heme oxygenase (mycobilin-producing) (105 aa).

The ABM domain occupies valine 3–phenylalanine 92. Heme contacts are provided by residues arginine 22 to arginine 26, histidine 75, and valine 83 to glycine 86.

Belongs to the antibiotic biosynthesis monooxygenase family. In terms of assembly, homodimer.

The catalysed reaction is heme b + 3 AH2 + 3 O2 + 2 H(+) = mycobilin a + Fe(2+) + 3 A + 3 H2O. It carries out the reaction heme b + 3 AH2 + 3 O2 + 2 H(+) = mycobilin b + Fe(2+) + 3 A + 3 H2O. In terms of biological role, catalyzes the oxidative degradation of the heme macrocyclic porphyrin ring in the presence of a suitable electron donor such as ascorbate or NADPH--cytochrome P450 reductase, with subsequent release of free iron. This Mycobacterium tuberculosis (strain CDC 1551 / Oshkosh) protein is Heme oxygenase (mycobilin-producing) (mhuD).